A 248-amino-acid polypeptide reads, in one-letter code: Probable phosphatase VCM66_A0854 (248 aa).

Zn(2+) is bound by residues His-8, His-10, His-16, His-41, Glu-74, His-102, His-132, Asp-194, and His-196.

Belongs to the PHP family. Zn(2+) is required as a cofactor.

This is Probable phosphatase VCM66_A0854 from Vibrio cholerae serotype O1 (strain M66-2).